The following is a 450-amino-acid chain: Sensor histidine kinase EnvZ (450 aa).

At 1–15 (MRRMRFSPRSSFART) the chain is on the cytoplasmic side. Residues 16-35 (LLLIVTLLFVSLVTTYLVVL) form a helical membrane-spanning segment. The Periplasmic segment spans residues 36-158 (NFAILPSLQQ…LTEIHQGDFS (123 aa)). The chain crosses the membrane as a helical span at residues 159–179 (PLFRYTLAIMLLAIGGAWLFI). Residues 180–232 (RIQNRPLVDLEHAALQVGKGIIPPPLREYGASEVRSVTRAFNHMAAGVKQLAD) enclose the HAMP domain. Residues 180 to 450 (RIQNRPLVDL…ARVQGTTKEA (271 aa)) lie on the Cytoplasmic side of the membrane. The interval 223 to 289 (MAAGVKQLAD…IIEQFIDYLR (67 aa)) is cytoplasmic dimerization domain (CDD), when dimerized forms osmosensitive core. The 201-residue stretch at 240–440 (GVSHDLRTPL…SIRAWLPVPV (201 aa)) folds into the Histidine kinase domain. Residues His-243, 347–351 (NAARY), Asp-373, 392–393 (RG), and 402–406 (TGLGL) each bind ATP. Residue His-243 is modified to Phosphohistidine; by autocatalysis.

As to quaternary structure, homodimer. Autophosphorylated.

Its subcellular location is the cell inner membrane. The catalysed reaction is ATP + protein L-histidine = ADP + protein N-phospho-L-histidine.. Functionally, member of the two-component regulatory system EnvZ/OmpR involved in regulating expression of the outer membrane porins OmpC and OmpF as well as other genes. Unlike E.coli or S.typhimurium both porins are expressed constitutively. Involved in regulation of the biosynthesis of Vi polysaccharide, a capsular antigen thought to be involved in the virulence of S.typhi. Vi antigen is synthesized at low NaCl concentrations (under 0.4 M). EnvZ functions as a membrane-associated protein kinase that phosphorylates OmpR in response to environmental signals. The sequence is that of Sensor histidine kinase EnvZ (envZ) from Salmonella typhi.